A 59-amino-acid polypeptide reads, in one-letter code: Large ribosomal subunit protein bL32 (59 aa).

The disordered stretch occupies residues 1-22; it reads MAVQQNKKSPSKRGMHRSHDFL.

The protein belongs to the bacterial ribosomal protein bL32 family.

The protein is Large ribosomal subunit protein bL32 of Thiobacillus denitrificans (strain ATCC 25259 / T1).